Here is a 120-residue protein sequence, read N- to C-terminus: Myohemerythrin (120 aa).

Residues His-26, His-56, Glu-60, His-75, His-79, His-108, and Asp-113 each contribute to the Fe cation site.

This sequence belongs to the hemerythrin family. In terms of assembly, monomer.

The protein localises to the cytoplasm. Functionally, myohemerythrin is an oxygen-binding protein found in the retractor muscles of certain worms. The oxygen-binding site contains two iron atoms. This is Myohemerythrin from Theromyzon tessulatum (Duck leech).